A 334-amino-acid polypeptide reads, in one-letter code: Probable GTP 3',8-cyclase (334 aa).

Residues 24 to 256 (PYGRKVTGLR…RKKYMIDGVE (233 aa)) enclose the Radical SAM core domain. Arg33 is a GTP binding site. The [4Fe-4S] cluster site is built by Cys40 and Cys44. Tyr46 lines the S-adenosyl-L-methionine pocket. [4Fe-4S] cluster is bound at residue Cys47. Lys85 provides a ligand contact to GTP. An S-adenosyl-L-methionine-binding site is contributed by Gly89. Thr113 is a GTP binding site. Ser137 provides a ligand contact to S-adenosyl-L-methionine. Lys176 contributes to the GTP binding site. [4Fe-4S] cluster is bound by residues Cys269 and Cys272. GTP is bound at residue 274–276 (RLR). Cys286 provides a ligand contact to [4Fe-4S] cluster.

Belongs to the radical SAM superfamily. MoaA family. The cofactor is [4Fe-4S] cluster.

It carries out the reaction GTP + AH2 + S-adenosyl-L-methionine = (8S)-3',8-cyclo-7,8-dihydroguanosine 5'-triphosphate + 5'-deoxyadenosine + L-methionine + A + H(+). Its pathway is cofactor biosynthesis; molybdopterin biosynthesis. Catalyzes the cyclization of GTP to (8S)-3',8-cyclo-7,8-dihydroguanosine 5'-triphosphate. The protein is Probable GTP 3',8-cyclase of Methanosarcina mazei (strain ATCC BAA-159 / DSM 3647 / Goe1 / Go1 / JCM 11833 / OCM 88) (Methanosarcina frisia).